We begin with the raw amino-acid sequence, 194 residues long: PRELI domain containing protein 3B (194 aa).

The region spanning 1–172 (MKIWTSEHVF…VIHKLNAEIE (172 aa)) is the PRELI/MSF1 domain. 2 positions are modified to phosphoserine: Ser-46 and Ser-51.

It belongs to the slowmo family.

The chain is PRELI domain containing protein 3B (PRELID3B) from Sus scrofa (Pig).